The primary structure comprises 775 residues: Kojibiose phosphorylase (775 aa).

Substrate is bound at residue 361-362 (WD). The active-site Proton donor is the E501. Residue 614–615 (KQ) coordinates substrate.

Belongs to the glycosyl hydrolase 65 family. Homohexamer.

The enzyme catalyses kojibiose + phosphate = beta-D-glucose 1-phosphate + D-glucose. With respect to regulation, inhibited by Hg(2+) and Pb(2+). Functionally, catalyzes the reversible phosphorolysis of kojibiose into beta-D-glucose 1-phosphate (Glc1P) and D-glucose. Can act with alpha-1,2-oligoglucans, such as selaginose, but more slowly. Inactive when disaccharides with linkages other than alpha-1,2 linkages, such as sophorose, trehalose, neotrehalose, nigerose, laminaribiose, maltose, cellobiose, isomaltose, gentiobiose, sucrose and lactose, are used as substrates. In contrast, shows broad specificity for the reverse reaction. Various monosaccharides and disaccharides having a glucosyl residue at the non-reducing end are effective acceptors. The chain is Kojibiose phosphorylase from Thermoanaerobacter brockii (Thermoanaerobium brockii).